We begin with the raw amino-acid sequence, 537 residues long: Organic anion transporter 3 (537 aa).

At 1–11 the chain is on the cytoplasmic side; the sequence is MTFSEILDRVG. Ser-4 carries the phosphoserine modification. Residues 12-32 traverse the membrane as a helical segment; the sequence is SMGPFQYLHVTLLALPILGIA. Residues 33-123 lie on the Extracellular side of the membrane; the sequence is NHNLLQIFTA…LVCGSNKLKE (91 aa). Residue Asn-81 is glycosylated (N-linked (GlcNAc...) asparagine). The chain crosses the membrane as a helical span at residues 124–144; sequence MAQSVFMAGILVGGPVFGELS. Topologically, residues 145–150 are cytoplasmic; that stretch reads DRFGRK. Residues 151 to 171 form a helical membrane-spanning segment; the sequence is PILTWSYLLLAASGSSAAFSP. At 172–176 the chain is on the extracellular side; it reads SLTVY. The chain crosses the membrane as a helical span at residues 177-197; sequence MIFRFLCGCSISGISLSTIIL. Residues 198 to 212 are Cytoplasmic-facing; sequence NVEWVPTSTRAISST. A helical transmembrane segment spans residues 213–233; sequence TIGYCYTIGQFILPGLAYAVP. The Extracellular segment spans residues 234 to 236; sequence QWR. The helical transmembrane segment at 237–257 threads the bilayer; sequence WLQLSVSAAFFIFSLLSWWVP. Topologically, residues 258–327 are cytoplasmic; sequence ESIRWLVLSG…FRVSILRRVT (70 aa). A helical membrane pass occupies residues 328-348; it reads FCLSLAWFATGFAYYSLAMGV. Over 349-354 the chain is Extracellular; it reads EEFGVN. A helical transmembrane segment spans residues 355 to 375; the sequence is IYILQIIFGGVDIPAKFITIL. Topologically, residues 376 to 383 are cytoplasmic; the sequence is SISYLGRR. A helical transmembrane segment spans residues 384-404; that stretch reads ITQGFLLILAGVAILALIFVS. The Extracellular segment spans residues 405-411; that stretch reads SEMQLLR. Residues 412 to 432 traverse the membrane as a helical segment; that stretch reads TALAVFGKGCLSGSFSCLFLY. Topologically, residues 433 to 471 are cytoplasmic; that stretch reads TSELYPTVLRQTGMGISNIWARVGSMIAPLVKITGELQP. The helical transmembrane segment at 472 to 492 threads the bilayer; sequence FIPNVIFGTMTLLGGSAAFFL. Over 493-537 the chain is Extracellular; the sequence is LETLNRPLPETIEDIQDWYQQTKKTKQEPEAEKASQTIPLKTGGP. The interval 513-537 is disordered; that stretch reads QTKKTKQEPEAEKASQTIPLKTGGP.

This sequence belongs to the major facilitator (TC 2.A.1) superfamily. Organic cation transporter (TC 2.A.1.19) family. Expressed mainly in kidney. In kidney, detected in almost all parts of the nephron, including macula densa cells. Expressed (at protein level) throughout the renal cortex. Widely distributed in the brain with no large regional differences. Expressed in the choroid plexus (CP, located in the ventricles of the brain). Expressed in developing bone. Weakly expressed in brain and eye.

Its subcellular location is the basolateral cell membrane. It catalyses the reaction estrone 3-sulfate(out) + glutarate(in) = estrone 3-sulfate(in) + glutarate(out). The enzyme catalyses estrone 3-sulfate(in) + 2-oxoglutarate(out) = estrone 3-sulfate(out) + 2-oxoglutarate(in). It carries out the reaction taurocholate(out) + glutarate(in) = taurocholate(in) + glutarate(out). The catalysed reaction is dehydroepiandrosterone 3-sulfate(out) + glutarate(in) = dehydroepiandrosterone 3-sulfate(in) + glutarate(out). It catalyses the reaction glutarate(in) + 2-oxoglutarate(out) = glutarate(out) + 2-oxoglutarate(in). The enzyme catalyses urate(in) + 2-oxoglutarate(out) = urate(out) + 2-oxoglutarate(in). It carries out the reaction prostaglandin F2alpha(out) + glutarate(in) = prostaglandin F2alpha(in) + glutarate(out). The catalysed reaction is prostaglandin F2alpha(out) + 2-oxoglutarate(in) = prostaglandin F2alpha(in) + 2-oxoglutarate(out). It catalyses the reaction (R)-carnitine(out) + 2-oxoglutarate(in) = (R)-carnitine(in) + 2-oxoglutarate(out). The enzyme catalyses glutarate(in) + (R)-carnitine(out) = glutarate(out) + (R)-carnitine(in). It carries out the reaction prostaglandin E2(out) + 2-oxoglutarate(in) = prostaglandin E2(in) + 2-oxoglutarate(out). The catalysed reaction is prostaglandin E2(out) + glutarate(in) = prostaglandin E2(in) + glutarate(out). It catalyses the reaction urate(in) + glutarate(out) = urate(out) + glutarate(in). The enzyme catalyses taurocholate(out) + 2-oxoglutarate(in) = taurocholate(in) + 2-oxoglutarate(out). It carries out the reaction dehydroepiandrosterone 3-sulfate(out) + 2-oxoglutarate(in) = dehydroepiandrosterone 3-sulfate(in) + 2-oxoglutarate(out). The catalysed reaction is kynurenate(out) + a dicarboxylate(in) = kynurenate(in) + a dicarboxylate(out). It catalyses the reaction (indol-3-yl)acetate(out) + a dicarboxylate(in) = (indol-3-yl)acetate(in) + a dicarboxylate(out). The enzyme catalyses indoxyl sulfate(out) + a dicarboxylate(in) = indoxyl sulfate(in) + a dicarboxylate(out). It carries out the reaction N-benzoylglycine(out) + a dicarboxylate(in) = N-benzoylglycine(in) + a dicarboxylate(out). The catalysed reaction is 3-carboxy-4-methyl-5-propyl-2-furanpropanoate(out) + a dicarboxylate(in) = 3-carboxy-4-methyl-5-propyl-2-furanpropanoate(in) + a dicarboxylate(out). It catalyses the reaction (6R)-L-erythro-5,6,7,8-tetrahydrobiopterin(out) + a dicarboxylate(in) = (6R)-L-erythro-5,6,7,8-tetrahydrobiopterin(in) + a dicarboxylate(out). The enzyme catalyses L-erythro-7,8-dihydrobiopterin(out) + a dicarboxylate(in) = L-erythro-7,8-dihydrobiopterin(in) + a dicarboxylate(out). It carries out the reaction L-sepiapterin(out) + a dicarboxylate(in) = L-sepiapterin(in) + a dicarboxylate(out). With respect to regulation, expression inhibited by androgens such as testosterone. Its function is as follows. Functions as an organic anion/dicarboxylate exchanger that couples organic anion uptake indirectly to the sodium gradient. Transports organic anions such as estrone 3-sulfate (E1S) and urate in exchange for dicarboxylates such as glutarate or ketoglutarate (2-oxoglutarate). Plays an important role in the excretion of endogenous and exogenous organic anions, especially from the kidney and the brain. E1S transport is pH- and chloride-dependent and may also involve E1S/cGMP exchange. Responsible for the transport of prostaglandin E2 (PGE2) and prostaglandin F2(alpha) (PGF2(alpha)) in the basolateral side of the renal tubule. Involved in the transport of neuroactive tryptophan metabolites kynurenate and xanthurenate. Functions as a biopterin transporters involved in the uptake and the secretion of coenzymes tetrahydrobiopterin (BH4), dihydrobiopterin (BH2) and sepiapterin to urine, thereby determining baseline levels of blood biopterins. May be involved in the basolateral transport of steviol, a metabolite of the popular sugar substitute stevioside. May participate in the detoxification/ renal excretion of drugs and xenobiotics, such as the histamine H(2)-receptor antagonists fexofenadine and cimetidine, the antibiotic benzylpenicillin (PCG), the anionic herbicide 2,4-dichloro-phenoxyacetate (2,4-D), the diagnostic agent p-aminohippurate (PAH), the antiviral acyclovir (ACV), and the mycotoxin ochratoxin (OTA), by transporting these exogenous organic anions across the cell membrane in exchange for dicarboxylates such as 2-oxoglutarate. May contribute to the release of cortisol in the adrenals. Involved in one of the detoxification systems on the choroid plexus (CP), removes substrates such as E1S or taurocholate (TC), PCG, 2,4-D and PAH, from the cerebrospinal fluid (CSF) to the blood for eventual excretion in urine and bile. Also contributes to the uptake of several other organic compounds such as the prostanoids prostaglandin E(2) and prostaglandin F(2-alpha), L-carnitine, and the therapeutic drugs allopurinol, 6-mercaptopurine (6-MP) and 5-fluorouracil (5-FU). Mediates the transport of PAH, PCG, and the statins pravastatin and pitavastatin, from the cerebrum into the blood circulation across the blood-brain barrier (BBB). Contributes to the renal uptake of potent uremic toxins (indoxyl sulfate (IS), indole acetate (IA), hippurate/N-benzoylglycine (HA) and 3-carboxy-4-methyl-5-propyl-2-furanpropionate (CMPF)), pravastatin, PCG, E1S and dehydroepiandrosterone sulfate (DHEAS), and is partly involved in the renal uptake of temocaprilat (an angiotensin-converting enzyme (ACE) inhibitor). In summary, plays a role in the efflux of drugs and xenobiotics, helping reduce their undesired toxicological effects on the body. The protein is Organic anion transporter 3 (Slc22a8) of Mus musculus (Mouse).